Here is a 361-residue protein sequence, read N- to C-terminus: MTRAFNFSAGPATLPESVLRQAQAEMVEWNGVGASIVEISHRSADFMAVAAAAEADLRSLLSIPDDYAVLFTAGGATTIQALLPLNFAAPGQAADYVITGHWGKTAIKQAATSVDARIAADAQADGFVDIPPAASWTLSPHSAYVHITANETIHGVEFRDTPDVGTLPLFADFSSSIASEPLDISRYGLIYAGAQKNLGPVGISVVIVRRDLLERAGQPRADIFNYASHAARDSMLNTPPTWNWYVLGLTVKWMLEQGGVQEFARRNAEKAALVYGAIDGSGGFYRNLIKPAVRSRMNIPFFLPDEQLDALFVSESKAAGLLALKGHKAVGGIRASLYNAMPVAGAQALAAFMHDFQQRHG.

Arg42 serves as a coordination point for L-glutamate. Pyridoxal 5'-phosphate is bound by residues 76 to 77, Trp102, Thr152, Asp172, and Gln195; that span reads AT. At Lys196 the chain carries N6-(pyridoxal phosphate)lysine. 237-238 contributes to the pyridoxal 5'-phosphate binding site; the sequence is NT.

The protein belongs to the class-V pyridoxal-phosphate-dependent aminotransferase family. SerC subfamily. As to quaternary structure, homodimer. The cofactor is pyridoxal 5'-phosphate.

It localises to the cytoplasm. The catalysed reaction is O-phospho-L-serine + 2-oxoglutarate = 3-phosphooxypyruvate + L-glutamate. The enzyme catalyses 4-(phosphooxy)-L-threonine + 2-oxoglutarate = (R)-3-hydroxy-2-oxo-4-phosphooxybutanoate + L-glutamate. It participates in amino-acid biosynthesis; L-serine biosynthesis; L-serine from 3-phospho-D-glycerate: step 2/3. The protein operates within cofactor biosynthesis; pyridoxine 5'-phosphate biosynthesis; pyridoxine 5'-phosphate from D-erythrose 4-phosphate: step 3/5. Catalyzes the reversible conversion of 3-phosphohydroxypyruvate to phosphoserine and of 3-hydroxy-2-oxo-4-phosphonooxybutanoate to phosphohydroxythreonine. The sequence is that of Phosphoserine aminotransferase from Xanthomonas euvesicatoria pv. vesicatoria (strain 85-10) (Xanthomonas campestris pv. vesicatoria).